Here is a 332-residue protein sequence, read N- to C-terminus: Probable allantoicase (332 aa).

The protein belongs to the allantoicase family.

It catalyses the reaction allantoate + H2O = (S)-ureidoglycolate + urea. It functions in the pathway nitrogen metabolism; (S)-allantoin degradation; (S)-ureidoglycolate from allantoate (aminidohydrolase route): step 1/1. In Pseudomonas aeruginosa (strain UCBPP-PA14), this protein is Probable allantoicase.